The sequence spans 490 residues: tRNA modification GTPase MnmE (490 aa).

(6S)-5-formyl-5,6,7,8-tetrahydrofolate is bound by residues R23, E80, and K133. One can recognise a TrmE-type G domain in the interval 229–412 (GIEVVIAGQP…LRRILLEVAG (184 aa)). N239 provides a ligand contact to K(+). GTP contacts are provided by residues 239-244 (NAGKSS), 258-264 (TPVAGTT), and 283-286 (DTAG). Position 243 (S243) interacts with Mg(2+). K(+)-binding residues include T258, V260, and T263. A Mg(2+)-binding site is contributed by T264. Residues 366 to 382 (PTAPTESAAVPPASARP) show a composition bias toward low complexity. A disordered region spans residues 366–388 (PTAPTESAAVPPASARPAPAPRP). 393 to 395 (SAR) provides a ligand contact to GTP. A (6S)-5-formyl-5,6,7,8-tetrahydrofolate-binding site is contributed by K490.

It belongs to the TRAFAC class TrmE-Era-EngA-EngB-Septin-like GTPase superfamily. TrmE GTPase family. In terms of assembly, homodimer. Heterotetramer of two MnmE and two MnmG subunits. The cofactor is K(+).

Its subcellular location is the cytoplasm. Exhibits a very high intrinsic GTPase hydrolysis rate. Involved in the addition of a carboxymethylaminomethyl (cmnm) group at the wobble position (U34) of certain tRNAs, forming tRNA-cmnm(5)s(2)U34. This chain is tRNA modification GTPase MnmE, found in Verminephrobacter eiseniae (strain EF01-2).